The chain runs to 348 residues: Phosphate acyltransferase (348 aa).

This sequence belongs to the PlsX family. Homodimer. Probably interacts with PlsY.

Its subcellular location is the cytoplasm. It carries out the reaction a fatty acyl-[ACP] + phosphate = an acyl phosphate + holo-[ACP]. The protein operates within lipid metabolism; phospholipid metabolism. Catalyzes the reversible formation of acyl-phosphate (acyl-PO(4)) from acyl-[acyl-carrier-protein] (acyl-ACP). This enzyme utilizes acyl-ACP as fatty acyl donor, but not acyl-CoA. The chain is Phosphate acyltransferase from Francisella philomiragia subsp. philomiragia (strain ATCC 25017 / CCUG 19701 / FSC 153 / O#319-036).